Consider the following 513-residue polypeptide: RNA-binding protein FUS (513 aa).

Over residues Met1–Tyr14 the composition is skewed to polar residues. Positions Met1–Thr273 are disordered. Low complexity-rich tracts occupy residues Gln20–Gln36, Gln43–Gln63, and Ser84–Gly124. The segment covering Gln125–Gly139 has biased composition (gly residues). The segment covering Gln140 to Ser164 has biased composition (low complexity). Composition is skewed to gly residues over residues Ser165–Tyr176 and Ser185–Tyr219. Residues Arg211 and Arg213 each carry the asymmetric dimethylarginine; alternate modification. Omega-N-methylarginine; alternate is present on residues Arg211 and Arg213. 5 positions are modified to asymmetric dimethylarginine: Arg229, Arg231, Arg235, Arg238, and Arg246. Over residues Arg231–Arg246 the composition is skewed to gly residues. The residue at position 264 (Ser264) is a Phosphoserine. The region spanning Asn272–Arg358 is the RRM domain. At Thr273 the chain carries Phosphothreonine. Lys321 is covalently cross-linked (Glycyl lysine isopeptide (Lys-Gly) (interchain with G-Cter in SUMO2)). Residue Ser327 is modified to Phosphoserine. 2 disordered regions span residues Phe362–Gly411 and Cys431–Tyr513. 5 positions are modified to asymmetric dimethylarginine: Arg364, Arg370, Arg373, Arg375, and Arg381. The span at Arg364–Gln408 shows a compositional bias: gly residues. Position 394 is an asymmetric dimethylarginine; alternate (Arg394). At Arg394 the chain carries Omega-N-methylarginine; alternate. A RanBP2-type zinc finger spans residues Arg409 to Asp440. Positions Gly441–Tyr455 are enriched in gly residues. Positions Gly456–Gly480 are enriched in basic and acidic residues. An asymmetric dimethylarginine mark is found at Arg460, Arg463, Arg468, Arg472, Arg474, Arg478, Arg482, and Arg485. Positions Phe481–Pro495 are enriched in gly residues. Arg490 is subject to Asymmetric dimethylarginine; alternate. Arg490 carries the post-translational modification Omega-N-methylarginine; alternate. Over residues Met498–Tyr513 the composition is skewed to basic and acidic residues.

Belongs to the RRM TET family. In terms of assembly, self-oligomerizes (via N-terminal region). Oligomerization is essential for chromatin binding. Component of nuclear riboprotein complexes. Interacts with ILF3, TDRD3 and SF1. Interacts through its C-terminus with SFRS13A. Interacts with OTUB1 and SARNP. Interacts with LRSAM1. Interacts with SAFB1 in a DNA-dependent manner; this interaction tethers FUS to chromatin. Interacts with MATR3. Interacts with SNRNP70 and POLR2A; these interactions couple RNA transcription and splicing. Interacts (through its RNA-binding domain) with RALY (through its RNA-binding domain); both are components of the same RNPs. In terms of processing, phosphorylated in its N-terminal serine residues upon induced DNA damage. ATM and DNA-PK are able to phosphorylate FUS N-terminal region.

The protein localises to the nucleus. In terms of biological role, DNA/RNA-binding protein that plays a role in various cellular processes such as transcription regulation, RNA splicing, RNA transport, DNA repair and damage response. Binds to ssRNA containing the consensus sequence 5'-AGGUAA-3'. Binds to nascent pre-mRNAs and acts as a molecular mediator between RNA polymerase II and U1 small nuclear ribonucleoprotein thereby coupling transcription and splicing. Also binds its own pre-mRNA and autoregulates its expression; this autoregulation mechanism is mediated by non-sense-mediated decay. Plays a role in DNA repair mechanisms by promoting D-loop formation and homologous recombination during DNA double-strand break repair. In neuronal cells, plays crucial roles in dendritic spine formation and stability, RNA transport, mRNA stability and synaptic homeostasis. The polypeptide is RNA-binding protein FUS (FUS) (Bos taurus (Bovine)).